Reading from the N-terminus, the 132-residue chain is MVMTDPIADFLTRIRNANQAKHEVLEVPASNIKKGIAEILKREGFVKNVEVIEDDKQGIIRVFLKYGQNGERVITNLKRISKPGLRVYSKREDIPKVLNGLGIAIISTSEGLLTDKEARQKNVGGEVIAYVW.

This sequence belongs to the universal ribosomal protein uS8 family. Part of the 30S ribosomal subunit. Contacts proteins S5 and S12.

Its function is as follows. One of the primary rRNA binding proteins, it binds directly to 16S rRNA central domain where it helps coordinate assembly of the platform of the 30S subunit. The polypeptide is Small ribosomal subunit protein uS8 (Streptococcus thermophilus (strain CNRZ 1066)).